A 131-amino-acid polypeptide reads, in one-letter code: Profilin-2 (131 aa).

This sequence belongs to the profilin family. As to quaternary structure, occurs in many kinds of cells as a complex with monomeric actin in a 1:1 ratio.

The protein localises to the cytoplasm. Its subcellular location is the cytoskeleton. Binds to actin and affects the structure of the cytoskeleton. At high concentrations, profilin prevents the polymerization of actin, whereas it enhances it at low concentrations. By binding to PIP2, it inhibits the formation of IP3 and DG. This is Profilin-2 (PRO2) from Triticum aestivum (Wheat).